The sequence spans 157 residues: Transcriptional repressor NrdR (157 aa).

Residues 1–24 (MRCPKCGGNKSSVVDSRQAEDGNT) form a disordered region. The segment at 3–34 (CPKCGGNKSSVVDSRQAEDGNTIRRRRECEEC) is a zinc-finger region. The ATP-cone domain occupies 49–139 (LVVVKKDGTR…VYRSFKDVGE (91 aa)).

Belongs to the NrdR family. The cofactor is Zn(2+).

Negatively regulates transcription of bacterial ribonucleotide reductase nrd genes and operons by binding to NrdR-boxes. The protein is Transcriptional repressor NrdR of Streptococcus sanguinis (strain SK36).